Consider the following 190-residue polypeptide: ATP synthase subunit delta (190 aa).

Belongs to the ATPase delta chain family. In terms of assembly, F-type ATPases have 2 components, F(1) - the catalytic core - and F(0) - the membrane proton channel. F(1) has five subunits: alpha(3), beta(3), gamma(1), delta(1), epsilon(1). F(0) has three main subunits: a(1), b(2) and c(10-14). The alpha and beta chains form an alternating ring which encloses part of the gamma chain. F(1) is attached to F(0) by a central stalk formed by the gamma and epsilon chains, while a peripheral stalk is formed by the delta and b chains.

It localises to the cell inner membrane. F(1)F(0) ATP synthase produces ATP from ADP in the presence of a proton or sodium gradient. F-type ATPases consist of two structural domains, F(1) containing the extramembraneous catalytic core and F(0) containing the membrane proton channel, linked together by a central stalk and a peripheral stalk. During catalysis, ATP synthesis in the catalytic domain of F(1) is coupled via a rotary mechanism of the central stalk subunits to proton translocation. In terms of biological role, this protein is part of the stalk that links CF(0) to CF(1). It either transmits conformational changes from CF(0) to CF(1) or is implicated in proton conduction. The sequence is that of ATP synthase subunit delta from Anaplasma marginale (strain Florida).